We begin with the raw amino-acid sequence, 170 residues long: Flavodoxin (170 aa).

The region spanning 4 to 165 is the Flavodoxin-like domain; it reads IGLFYGTQTG…RVKTWVSEIK (162 aa).

The protein belongs to the flavodoxin family. The cofactor is FMN.

In terms of biological role, low-potential electron donor to a number of redox enzymes. The protein is Flavodoxin (isiB) of Synechocystis sp. (strain ATCC 27184 / PCC 6803 / Kazusa).